The chain runs to 576 residues: Arginine--tRNA ligase (576 aa).

Positions 126 to 136 (ANPTGPMHIGH) match the 'HIGH' region motif.

It belongs to the class-I aminoacyl-tRNA synthetase family. As to quaternary structure, monomer.

The protein localises to the cytoplasm. The enzyme catalyses tRNA(Arg) + L-arginine + ATP = L-arginyl-tRNA(Arg) + AMP + diphosphate. In Rickettsia canadensis (strain McKiel), this protein is Arginine--tRNA ligase.